A 788-amino-acid chain; its full sequence is Pre-rRNA-processing protein TSR1 homolog (788 aa).

The segment at 1–40 (MSTTGHRAGVFKKPAKPHKSWKGKRTKGEITTENRGREGV) is disordered. A compositionally biased stretch (basic residues) spans 9–25 (GVFKKPAKPHKSWKGKR). Positions 26-40 (TKGEITTENRGREGV) are enriched in basic and acidic residues. Residues 83–243 (APCLVTILSL…LRTLNETKKK (161 aa)) enclose the Bms1-type G domain. The tract at residues 354–433 (LEEADKEMRR…ASEMMFHDEI (80 aa)) is disordered. Over residues 378–412 (DDSEDDEDEEDEDEDMDDEEEDKDLEEDDEEEDTP) the composition is skewed to acidic residues.

This sequence belongs to the TRAFAC class translation factor GTPase superfamily. Bms1-like GTPase family. TSR1 subfamily.

It is found in the nucleus. The protein resides in the nucleolus. In terms of biological role, required during maturation of the 40S ribosomal subunit in the nucleolus. The chain is Pre-rRNA-processing protein TSR1 homolog from Caenorhabditis briggsae.